A 160-amino-acid chain; its full sequence is SsrA-binding protein (160 aa).

A disordered region spans residues 136–160 (KRHVEKERDANREVQRAMRSKGKDD).

It belongs to the SmpB family.

It localises to the cytoplasm. Its function is as follows. Required for rescue of stalled ribosomes mediated by trans-translation. Binds to transfer-messenger RNA (tmRNA), required for stable association of tmRNA with ribosomes. tmRNA and SmpB together mimic tRNA shape, replacing the anticodon stem-loop with SmpB. tmRNA is encoded by the ssrA gene; the 2 termini fold to resemble tRNA(Ala) and it encodes a 'tag peptide', a short internal open reading frame. During trans-translation Ala-aminoacylated tmRNA acts like a tRNA, entering the A-site of stalled ribosomes, displacing the stalled mRNA. The ribosome then switches to translate the ORF on the tmRNA; the nascent peptide is terminated with the 'tag peptide' encoded by the tmRNA and targeted for degradation. The ribosome is freed to recommence translation, which seems to be the essential function of trans-translation. The sequence is that of SsrA-binding protein from Ectopseudomonas mendocina (strain ymp) (Pseudomonas mendocina).